A 58-amino-acid chain; its full sequence is VIEPDCKKYEGKKCPPDIALVCGTNGREYYNECALCVFIRDSTLKADKAIKIKKWGKC.

Positions 1–58 constitute a Kazal-like domain; it reads VIEPDCKKYEGKKCPPDIALVCGTNGREYYNECALCVFIRDSTLKADKAIKIKKWGKC. Intrachain disulfides connect Cys-6-Cys-36, Cys-14-Cys-33, and Cys-22-Cys-58.

In terms of tissue distribution, skin.

The protein resides in the secreted. Its function is as follows. May have a role in mucosal defense against microbes by interacting directly with their membranes. This Phyllomedusa sauvagei (Sauvage's leaf frog) protein is Proteinase inhibitor PSKP-2.